The following is a 240-amino-acid chain: tRNA (guanine-N(1)-)-methyltransferase (240 aa).

S-adenosyl-L-methionine-binding positions include Gly-110 and 129-134 (LGDFVL).

The protein belongs to the RNA methyltransferase TrmD family. Homodimer.

Its subcellular location is the cytoplasm. It carries out the reaction guanosine(37) in tRNA + S-adenosyl-L-methionine = N(1)-methylguanosine(37) in tRNA + S-adenosyl-L-homocysteine + H(+). In terms of biological role, specifically methylates guanosine-37 in various tRNAs. This chain is tRNA (guanine-N(1)-)-methyltransferase, found in Clostridium botulinum (strain Langeland / NCTC 10281 / Type F).